A 66-amino-acid polypeptide reads, in one-letter code: UPF0370 protein YpfN (66 aa).

A helical membrane pass occupies residues 4 to 24; the sequence is LAKYWWILVLVFLVGVLLNVI. Positions 39–66 are disordered; it reads KPELPPHRDFNDKWDDEDDWPKKDQSKK. Positions 42-51 are enriched in basic and acidic residues; it reads LPPHRDFNDK.

The protein belongs to the UPF0370 family.

It localises to the cell membrane. In Salmonella arizonae (strain ATCC BAA-731 / CDC346-86 / RSK2980), this protein is UPF0370 protein YpfN.